Consider the following 423-residue polypeptide: Acyl-coenzyme A diphosphatase FITM2 (423 aa).

The disordered stretch occupies residues 1–47 (MATKRRPLRPNLGGTAGSPSSSGSNMNFRPGGPDITRSEARGTRPTA). Over 1 to 75 (MATKRRPLRP…KTIFFNTDLK (75 aa)) the chain is Cytoplasmic. The chain crosses the membrane as a helical span at residues 76–96 (VALYLGSLFVISVIGDFVPFP). Topologically, residues 97–113 (KTYFARSDNLFNQYFVK) are lumenal. The chain crosses the membrane as a helical span at residues 114-134 (IGWGWTLLFVVPFLVLSAYTI). The Cytoplasmic segment spans residues 135–146 (TCGDHKRMLRHH). A helical transmembrane segment spans residues 147–167 (FPRIVIATFFWFFWTKLFNVV). Over 168–191 (ENSYGRCTTKGYATKSSCLKAGHL) the chain is Lumenal. Residues 192–212 (WKGFDISGHAFILIHSSLVLI) traverse the membrane as a helical segment. Histidine 200 is an active-site residue. The Cytoplasmic segment spans residues 213–270 (EEARPIIRWETIKEHIRNERHNRSTAENSGTNPLRTLNEEQMRSLQFLYKRLTPIIRT). The chain crosses the membrane as a helical span at residues 271-291 (LFIGMAALQLLWDIMLVGTML). At 292 to 299 (YYHRMIEK) the chain is on the lumenal side. Histidine 294 is an active-site residue. Residues 300–320 (VISGIIAILTWYFTYRFWYPT) form a helical membrane-spanning segment. The Cytoplasmic portion of the chain corresponds to 321 to 423 (PGLLPEAPGN…RDREQQTLES (103 aa)). 2 disordered regions span residues 344 to 381 (FKRPSHLSTGAATTSSGSNSSRTNLNGKAATTGVPRDQ) and 400 to 423 (AAANLLMSDQQKRERDREQQTLES). The span at 351–367 (STGAATTSSGSNSSRTN) shows a compositional bias: low complexity. Basic and acidic residues predominate over residues 409–423 (QQKRERDREQQTLES).

This sequence belongs to the FIT family. FIT2 subfamily.

It localises to the endoplasmic reticulum membrane. It carries out the reaction an acyl-CoA + H2O = an acyl-4'-phosphopantetheine + adenosine 3',5'-bisphosphate + 2 H(+). Its function is as follows. Fatty acyl-coenzyme A (CoA) diphosphatase that hydrolyzes fatty acyl-CoA to yield acyl-4'-phosphopantetheine and adenosine 3',5'-bisphosphate. Preferentially hydrolyzes unsaturated long-chain acyl-CoA substrates in the endoplasmic reticulum (ER) lumen. This catalytic activity is required for maintaining ER structure and for lipid droplets (LDs) biogenesis, which are lipid storage organelles involved in maintaining lipid and energy homeostasis. May directly bind to diacylglycerol (DAGs) and triacylglycerol, which is also important for LD biogenesis. May support directional budding of nacent LDs from the ER into the cytosol by reducing DAG levels at sites of LD formation. Plays a role in the regulation of cell morphology and cytoskeletal organization. Required for correct morphology of nociceptive multi-dendritic sensory neurons. Required for normal mechanical amplification in hearing. The protein is Acyl-coenzyme A diphosphatase FITM2 of Drosophila melanogaster (Fruit fly).